Here is a 304-residue protein sequence, read N- to C-terminus: UDP-3-O-acyl-N-acetylglucosamine deacetylase (304 aa).

His-78, His-237, and Asp-241 together coordinate Zn(2+). His-264 (proton donor) is an active-site residue.

This sequence belongs to the LpxC family. It depends on Zn(2+) as a cofactor.

The catalysed reaction is a UDP-3-O-[(3R)-3-hydroxyacyl]-N-acetyl-alpha-D-glucosamine + H2O = a UDP-3-O-[(3R)-3-hydroxyacyl]-alpha-D-glucosamine + acetate. It functions in the pathway glycolipid biosynthesis; lipid IV(A) biosynthesis; lipid IV(A) from (3R)-3-hydroxytetradecanoyl-[acyl-carrier-protein] and UDP-N-acetyl-alpha-D-glucosamine: step 2/6. Functionally, catalyzes the hydrolysis of UDP-3-O-myristoyl-N-acetylglucosamine to form UDP-3-O-myristoylglucosamine and acetate, the committed step in lipid A biosynthesis. The sequence is that of UDP-3-O-acyl-N-acetylglucosamine deacetylase from Xylella fastidiosa (strain 9a5c).